Here is a 68-residue protein sequence, read N- to C-terminus: Intracellular calcium channel modulator CCP-Ts (68 aa).

An N-terminal signal peptide occupies residues 1-23 (MNPKLLIVIGLLLATGVCSFAKA). 3 disulfides stabilise this stretch: Cys-33–Cys-47, Cys-40–Cys-53, and Cys-46–Cys-62.

The protein belongs to the scorpion calcin-like family. Expressed by the venom gland. In intravenously injected mice, the labeled toxin has preference for heart, liver and lungs.

It is found in the secreted. It localises to the nucleus. Functionally, cell penetrating peptide (CPP) that increases intracellular calcium release through the activation of nuclear inositol 1,4,5-trisphosphate receptors (ITPR) of cardiomyocytes, thereby causing an increase in the contraction frequency of these cells. In vivo, this toxin is not lethal to mice, hovewer anti-CPP serum reduces venom lethality, suggesting that this toxin is lethal when it acts in synergy with other venom components. The protein is Intracellular calcium channel modulator CCP-Ts of Tityus serrulatus (Brazilian scorpion).